The primary structure comprises 380 residues: Cytochrome b (380 aa).

The next 4 helical transmembrane spans lie at 33–53 (LGSLLGTCLVLQIVTGLFLAM), 77–98 (WVIRYLHANGASMFFICLFLHI), 113–133 (WNIGIILLLATMATAFMGYVL), and 178–198 (FFTFHFILPFIITALVALHLL). Histidine 83 and histidine 97 together coordinate heme b. Heme b is bound by residues histidine 182 and histidine 196. Residue histidine 201 participates in a ubiquinone binding. A run of 4 helical transmembrane segments spans residues 226–246 (TKDILGLFLLLLTLMSLVLFS), 288–308 (LGGVLALLLSILILMTIPMLH), 320–340 (LSQLTYWLWAANLLTLTWIGG), and 347–367 (FITIGQVTSVLYFITILILVP).

The protein belongs to the cytochrome b family. In terms of assembly, the cytochrome bc1 complex contains 11 subunits: 3 respiratory subunits (MT-CYB, CYC1 and UQCRFS1), 2 core proteins (UQCRC1 and UQCRC2) and 6 low-molecular weight proteins (UQCRH/QCR6, UQCRB/QCR7, UQCRQ/QCR8, UQCR10/QCR9, UQCR11/QCR10 and a cleavage product of UQCRFS1). This cytochrome bc1 complex then forms a dimer. The cofactor is heme b.

The protein resides in the mitochondrion inner membrane. In terms of biological role, component of the ubiquinol-cytochrome c reductase complex (complex III or cytochrome b-c1 complex) that is part of the mitochondrial respiratory chain. The b-c1 complex mediates electron transfer from ubiquinol to cytochrome c. Contributes to the generation of a proton gradient across the mitochondrial membrane that is then used for ATP synthesis. This Nomascus leucogenys (Northern white-cheeked gibbon) protein is Cytochrome b (MT-CYB).